The chain runs to 520 residues: Amine oxidase [flavin-containing] B (520 aa).

Ser2 is subject to N-acetylserine. The Cytoplasmic portion of the chain corresponds to 2–489; it reads SNKSDVIVVG…TFLERHLPSV (488 aa). 2 positions are modified to N6-acetyllysine: Lys52 and Lys248. Residue Cys397 is modified to S-8alpha-FAD cysteine. A helical; Anchor for type IV membrane protein transmembrane segment spans residues 490–516; that stretch reads PGLLKLFGLTTILSATALGFLAHKRGL. The Mitochondrial intermembrane segment spans residues 517 to 520; sequence FVHF.

This sequence belongs to the flavin monoamine oxidase family. Monomer, homo- or heterodimer (containing two subunits of similar size). Each subunit contains a covalently bound flavin. Enzymatically active as monomer. FAD is required as a cofactor.

Its subcellular location is the mitochondrion outer membrane. It carries out the reaction a secondary aliphatic amine + O2 + H2O = a primary amine + an aldehyde + H2O2. The enzyme catalyses (R)-adrenaline + O2 + H2O = (R)-3,4-dihydroxymandelaldehyde + methylamine + H2O2. The catalysed reaction is a primary methyl amine + O2 + H2O = an aldehyde + H2O2 + NH4(+). It catalyses the reaction benzylamine + O2 + H2O = benzaldehyde + H2O2 + NH4(+). It carries out the reaction dopamine + O2 + H2O = 3,4-dihydroxyphenylacetaldehyde + H2O2 + NH4(+). The enzyme catalyses tyramine + O2 + H2O = (4-hydroxyphenyl)acetaldehyde + H2O2 + NH4(+). The catalysed reaction is (R)-noradrenaline + O2 + H2O = (R)-3,4-dihydroxymandelaldehyde + H2O2 + NH4(+). It catalyses the reaction 2-phenylethylamine + O2 + H2O = 2-phenylacetaldehyde + H2O2 + NH4(+). It carries out the reaction N-acetylputrescine + O2 + H2O = 4-acetamidobutanal + H2O2 + NH4(+). In terms of biological role, catalyzes the oxidative deamination of primary and some secondary amines such as neurotransmitters, and exogenous amines including the tertiary amine, neurotoxin 1-methyl-4-phenyl-1,2,3,6-tetrahydropyridine (MPTP), with concomitant reduction of oxygen to hydrogen peroxide and participates in the metabolism of neuroactive and vasoactive amines in the central nervous system and peripheral tissues. Preferentially degrades benzylamine and phenylethylamine. This Mus musculus (Mouse) protein is Amine oxidase [flavin-containing] B.